The following is a 263-amino-acid chain: Small ribosomal subunit protein uS2 (263 aa).

This sequence belongs to the universal ribosomal protein uS2 family.

The protein is Small ribosomal subunit protein uS2 of Roseiflexus castenholzii (strain DSM 13941 / HLO8).